Consider the following 214-residue polypeptide: MIKVLVVDDHDLVRTGITRMLADIDGLQVVGQADSGEESLKKARELKPDVVLMDVKMPGIGGLEATRKMLRSHPDIKVVAVTVCEEDPFPTRLLQAGAAGYMTKGAGLAEMVQAIRLVFAGQRYISPQIAQQLALKSFQPQVNNSPFDLLSEREIQIALMIVGCQKVQTISDKLCLSPKTVNTYRYRIFEKLSISSDVELALLAVRHGMVDASA.

A Response regulatory domain is found at 3-119; that stretch reads KVLVVDDHDL…EMVQAIRLVF (117 aa). Asp-54 carries the post-translational modification 4-aspartylphosphate. The 66-residue stretch at 143–208 folds into the HTH luxR-type domain; sequence NNSPFDLLSE…ELALLAVRHG (66 aa). The H-T-H motif DNA-binding region spans 167 to 186; that stretch reads VQTISDKLCLSPKTVNTYRY.

Phosphorylated by LemA.

Its function is as follows. Forms part of a two-component regulatory system GacA/GacA(LemA). May be involved in lesion formation, swarming and in the production of extracellular protease, syringomycin and N-acyl-L-homoserine lactone (acyl-HSL). In Pseudomonas syringae pv. syringae (strain B728a), this protein is Response regulator GacA (gacA).